We begin with the raw amino-acid sequence, 1077 residues long: ATP-dependent helicase HRQ1 (1077 aa).

Positions 299-483 (INSLHQGENV…DMFGINEVTL (185 aa)) constitute a Helicase ATP-binding domain. An ATP-binding site is contributed by 312–319 (TSTSSGKS). The DEAH box signature appears at 423–426 (DELH). A Helicase C-terminal domain is found at 521-678 (ILVQLILNNV…DLVLDFNNIL (158 aa)).

Belongs to the helicase family. HRQ1 subfamily. Forms heptamer rings. Interacts with RAD4. Requires Mg(2+) as cofactor.

The protein localises to the nucleus. The enzyme catalyses Couples ATP hydrolysis with the unwinding of duplex DNA by translocating in the 3'-5' direction.. The catalysed reaction is ATP + H2O = ADP + phosphate + H(+). In terms of biological role, helicase with 3'-5' helicase activity involved in genome stability. Functions in the RAD4-dependent nucleotide excision repair (NER) pathway and plays a critical role in DNA interstrand cross-link repair. Unwinds relatively long duplex DNA up to 120-bp and requires a long 3'-tail of at least 70 nucleotides for efficient unwinding of duplex DNA. Activity is significantly stimulated by a preexisting fork structure. Shows both processive helicase and DNA strand annealing activities. Affects telomere length by a non-catalytic mechanism, probably through inhibiting telomerase by competing with it for ssDNA binding. This chain is ATP-dependent helicase HRQ1, found in Saccharomyces cerevisiae (strain ATCC 204508 / S288c) (Baker's yeast).